Reading from the N-terminus, the 189-residue chain is Probable nicotinate-nucleotide adenylyltransferase (189 aa).

The protein belongs to the NadD family.

It carries out the reaction nicotinate beta-D-ribonucleotide + ATP + H(+) = deamido-NAD(+) + diphosphate. It functions in the pathway cofactor biosynthesis; NAD(+) biosynthesis; deamido-NAD(+) from nicotinate D-ribonucleotide: step 1/1. In terms of biological role, catalyzes the reversible adenylation of nicotinate mononucleotide (NaMN) to nicotinic acid adenine dinucleotide (NaAD). The protein is Probable nicotinate-nucleotide adenylyltransferase of Bacillus cereus (strain ATCC 10987 / NRS 248).